We begin with the raw amino-acid sequence, 151 residues long: Ubiquitin-conjugating enzyme E2 2 (151 aa).

Positions 1 to 26 are disordered; that stretch reads MSTSARRRLMRDFKRMQTDPPAGVSA. Residues 4 to 150 enclose the UBC core domain; sequence SARRRLMRDF…VRETVEKSWE (147 aa). Residue Cys88 is the Glycyl thioester intermediate of the active site.

It belongs to the ubiquitin-conjugating enzyme family.

The protein localises to the cytoplasm. It is found in the nucleus. It catalyses the reaction S-ubiquitinyl-[E1 ubiquitin-activating enzyme]-L-cysteine + [E2 ubiquitin-conjugating enzyme]-L-cysteine = [E1 ubiquitin-activating enzyme]-L-cysteine + S-ubiquitinyl-[E2 ubiquitin-conjugating enzyme]-L-cysteine.. The protein operates within protein modification; protein ubiquitination. Catalyzes the covalent attachment of ubiquitin to other proteins. Plays a role in transcription regulation by catalyzing the monoubiquitination of histone H2B to form H2BK123ub1. H2BK123ub1 gives a specific tag for epigenetic transcriptional activation and is also a prerequisite for H3K4me and H3K79me formation. Also involved in postreplication repair of UV-damaged DNA, in N-end rule-dependent protein degradation and in sporulation. This Aspergillus fumigatus (strain ATCC MYA-4609 / CBS 101355 / FGSC A1100 / Af293) (Neosartorya fumigata) protein is Ubiquitin-conjugating enzyme E2 2 (ubc2).